The sequence spans 876 residues: MQEHYQPAAIEPAAQKKWDDARIFNVSEDASKPKYYCLSMFPYPSGKLHMGHVRNYTIGDVLSRFKLLNGFNVMQPMGWDAFGMPAENAAMKNNVAPAAWTYDNIEYMKTQLKSLGFAIDWARETATCKPEYYRWEQWLFTKLFEKGIVYRKNGTVNWDPVDQTVLANEQVIDGRGWRSGALIEKREIPMYYFKITDYAEELLNDLDKLEHWPEQVKTMQRNWIGKSRGMTVRFAVSDDSKQGLEGDYAKLLQVYTTRPDTLMGATYVAVAAEHPLAAAAAADKPELQAFIAECKAGSVAEADMATMEKKGVPTGRYVVNPLNGDKLEVWIANYVLWGYGDGAVMAVPAHDERDFEFAAKYNLPKKQVIAVGDNAFDANRWQEWYADKENGVLVNSGDLDGLDFQTAFDAVAAKLQSQGAGEPKTQYRLRDWGISRQRYWGCPIPIVHCEQCGDVPVPADQLPVVLPENVVPDGMGSPLAKMPEFYETACPCCGGAAKRETDTMDTFMESSWYFFRYMSPKFSDGMVDPAAAKYWGAVDQYIGGIEHAILHLLYARFFTKLMRDEGLVNVDEPFERLLTQGMVVCETYYRENDKGGKDWINPADVELTFDDKGRPISAVLKADGLPVVISGTEKMSKSKNNGVDPQELINAYGADTARLFMMFAAPPEQSLEWSDSGVEGAHRFLRRLWRTVYEYLKQGEAVKAFAGSQDGLSKELKDLRHKLHATTAKVSDDYGRRQQFNTAIAAVMELLNQYDKTDTGGEQGRAVAQEVLETAVRLLWPIVPHICETLWSELNGAKLWEAGWPTVDEAALVKSEIEVMVQVNGKLRGKITVAADASKADLEAAALATEGAVKFMEGKPAKKIIVVPGRLVNIVV.

Positions 42–52 match the 'HIGH' region motif; that stretch reads PYPSGKLHMGH. Residues 634 to 638 carry the 'KMSKS' region motif; the sequence is KMSKS. Residue K637 coordinates ATP.

The protein belongs to the class-I aminoacyl-tRNA synthetase family.

Its subcellular location is the cytoplasm. It catalyses the reaction tRNA(Leu) + L-leucine + ATP = L-leucyl-tRNA(Leu) + AMP + diphosphate. The polypeptide is Leucine--tRNA ligase (Neisseria meningitidis serogroup C / serotype 2a (strain ATCC 700532 / DSM 15464 / FAM18)).